The chain runs to 24 residues: Snake venom metalloproteinase Batx-1 (24 aa).

Positions 1 to 24 (YIELAVVADHGIFTKYNSNLNTIR) constitute a Peptidase M12B domain. Glu-3 provides a ligand contact to Ca(2+).

Belongs to the venom metalloproteinase (M12B) family. P-I subfamily. As to quaternary structure, monomer. The cofactor is Zn(2+). In terms of processing, the N-terminus is blocked. Contains 3 disulfide bonds. In terms of tissue distribution, expressed by the venom gland.

The protein resides in the secreted. Inhibited by EDTA, and o-phenanthroline, but not inhibited by PMSF, pepstatin A, and aprotinin. Its function is as follows. Zinc metalloproteinase that exhits a weak hemorrhagic activity. Degrades preferentially the Aalpha- (FGA) and Bbeta-chains (FGB) of fibrinogen, and partially degrades gamma-chain (FGG) at higher concentration. Induces a mild myotoxicity, but lacks coagulant activity on human plasma or bovin fibrinogen and defibrinating activity. The sequence is that of Snake venom metalloproteinase Batx-1 from Bothrops atrox (Barba amarilla).